The sequence spans 198 residues: Probable minor pilin MMP0709 (198 aa).

The propeptide occupies 1–5; sequence MSNRG. The QXSXEXXXL signature appears at 6–14; it reads QLSIEMVIL.

Post-translationally, the N-terminus is probably cleaved by the prepilin peptidase EppA, which recognizes the class III signal sequence.

The protein localises to the secreted. It localises to the cell surface. Its subcellular location is the fimbrium. The polypeptide is Probable minor pilin MMP0709 (Methanococcus maripaludis (strain DSM 14266 / JCM 13030 / NBRC 101832 / S2 / LL)).